The sequence spans 288 residues: ATP synthase gamma chain (288 aa).

It belongs to the ATPase gamma chain family. In terms of assembly, F-type ATPases have 2 components, CF(1) - the catalytic core - and CF(0) - the membrane proton channel. CF(1) has five subunits: alpha(3), beta(3), gamma(1), delta(1), epsilon(1). CF(0) has three main subunits: a, b and c.

The protein localises to the cell inner membrane. Produces ATP from ADP in the presence of a proton gradient across the membrane. The gamma chain is believed to be important in regulating ATPase activity and the flow of protons through the CF(0) complex. This Actinobacillus pleuropneumoniae serotype 5b (strain L20) protein is ATP synthase gamma chain.